Reading from the N-terminus, the 179-residue chain is MSVVIASRRYANALLSVVEESNTIDKTLDEMNAISEVLHHSRDLVHALKSPLISYDKKIHIVEEVFKGRVSETVMFFLKLVGKKNRLGHLPHIVDEFKNLLDEDRGIINVDITSAVELSDEQANELVATIANMSGKQVRATLTVNEELIAGAAVKIADTIIDGTVRHQLSKLRSSLVAA.

This sequence belongs to the ATPase delta chain family. In terms of assembly, F-type ATPases have 2 components, F(1) - the catalytic core - and F(0) - the membrane proton channel. F(1) has five subunits: alpha(3), beta(3), gamma(1), delta(1), epsilon(1). F(0) has three main subunits: a(1), b(2) and c(10-14). The alpha and beta chains form an alternating ring which encloses part of the gamma chain. F(1) is attached to F(0) by a central stalk formed by the gamma and epsilon chains, while a peripheral stalk is formed by the delta and b chains.

It localises to the cell inner membrane. F(1)F(0) ATP synthase produces ATP from ADP in the presence of a proton or sodium gradient. F-type ATPases consist of two structural domains, F(1) containing the extramembraneous catalytic core and F(0) containing the membrane proton channel, linked together by a central stalk and a peripheral stalk. During catalysis, ATP synthesis in the catalytic domain of F(1) is coupled via a rotary mechanism of the central stalk subunits to proton translocation. In terms of biological role, this protein is part of the stalk that links CF(0) to CF(1). It either transmits conformational changes from CF(0) to CF(1) or is implicated in proton conduction. This Chlorobium chlorochromatii (strain CaD3) protein is ATP synthase subunit delta.